The primary structure comprises 93 residues: Peptide YY-like (93 aa).

A signal peptide spans 1–27 (MVSPRVRLAALALSVCAILCLGMHASA). A Tyrosine amide modification is found at Tyr63. The propeptide at 65–93 (KRALTPENWIYRDPAEERVTYGLDDYAMW) is C-terminal extension.

The protein belongs to the NPY family. In terms of tissue distribution, gut and medial reticulospinal neuron system in the brainstem.

The protein localises to the secreted. In terms of biological role, gastrointestinal hormone and neuropeptide. The chain is Peptide YY-like (pyy) from Lampetra fluviatilis (European river lamprey).